We begin with the raw amino-acid sequence, 395 residues long: MVMAGASSLDEIRQAQRADGPAGILAIGTANPENHVLQAEYPDYYFRITNSEHMTDLKEKFKRMCDKSTIRKRHMHLTEEFLKENPHMCAYMAPSLDTRQDIVVVEVPKLGKEAAVKAIKEWGQPKSKITHVVFCTTSGVDMPGADYQLTKLLGLRPSVKRLMMYQQGCFAGGTVLRIAKDLAENNRGARVLVVCSEITAVTFRGPSDTHLDSLVGQALFSDGAAALIVGSDPDTSVGEKPIFEMVSAAQTILPDSDGAIDGHLREVGLTFHLLKDVPGLISKNIVKSLDEAFKPLGISDWNSLFWIAHPGGPAILDQVEIKLGLKEEKMRATRHVLSEYGNMSSACVLFILDEMRRKSAKDGVATTGEGLEWGVLFGFGPGLTVETVVLHSVPL.

At Val-2 the chain carries N-acetylvaline. Position 2 is an N-acetylalanine (Val-2). Cys-169 is an active-site residue.

This sequence belongs to the thiolase-like superfamily. Chalcone/stilbene synthases family.

The catalysed reaction is (E)-4-coumaroyl-CoA + 3 malonyl-CoA + 3 H(+) = 2',4,4',6'-tetrahydroxychalcone + 3 CO2 + 4 CoA. It participates in secondary metabolite biosynthesis; flavonoid biosynthesis. In terms of biological role, the primary product of this enzyme is 4,2',4',6'-tetrahydroxychalcone (also termed naringenin-chalcone or chalcone) which can under specific conditions spontaneously isomerize into naringenin. The sequence is that of Chalcone synthase (CHS) from Arabidopsis thaliana (Mouse-ear cress).